A 331-amino-acid chain; its full sequence is Bifunctional nuclease 1 (331 aa).

One can recognise a BFN domain in the interval 126–261 (CVQNNPRVLR…RIAYNNGLKV (136 aa)). The region spanning 291–326 (EAQEFDLVRNMLVAAVEERYKDAAQYRDQLFMFRAK) is the UVR domain.

Belongs to the bifunctional nuclease family.

It localises to the nucleus. Its function is as follows. Bifunctional nuclease with both RNase and DNase activities. Involved in basal defense response. Participates in abscisic acid-derived callose deposition following infection by a necrotrophic pathogen. In Oryza sativa subsp. japonica (Rice), this protein is Bifunctional nuclease 1 (BBD1).